The sequence spans 315 residues: Biotin synthase (315 aa).

The Radical SAM core domain occupies 39–266; the sequence is NSLQFATLLS…KSAIRLTAGR (228 aa). Residues cysteine 54, cysteine 58, and cysteine 61 each contribute to the [4Fe-4S] cluster site. [2Fe-2S] cluster is bound by residues cysteine 98, cysteine 129, cysteine 189, and arginine 261.

It belongs to the radical SAM superfamily. Biotin synthase family. Homodimer. [4Fe-4S] cluster serves as cofactor. The cofactor is [2Fe-2S] cluster.

It carries out the reaction (4R,5S)-dethiobiotin + (sulfur carrier)-SH + 2 reduced [2Fe-2S]-[ferredoxin] + 2 S-adenosyl-L-methionine = (sulfur carrier)-H + biotin + 2 5'-deoxyadenosine + 2 L-methionine + 2 oxidized [2Fe-2S]-[ferredoxin]. It functions in the pathway cofactor biosynthesis; biotin biosynthesis; biotin from 7,8-diaminononanoate: step 2/2. In terms of biological role, catalyzes the conversion of dethiobiotin (DTB) to biotin by the insertion of a sulfur atom into dethiobiotin via a radical-based mechanism. This chain is Biotin synthase, found in Legionella pneumophila (strain Paris).